Here is a 179-residue protein sequence, read N- to C-terminus: ATP synthase subunit delta (179 aa).

This sequence belongs to the ATPase delta chain family. As to quaternary structure, F-type ATPases have 2 components, F(1) - the catalytic core - and F(0) - the membrane proton channel. F(1) has five subunits: alpha(3), beta(3), gamma(1), delta(1), epsilon(1). F(0) has three main subunits: a(1), b(2) and c(10-14). The alpha and beta chains form an alternating ring which encloses part of the gamma chain. F(1) is attached to F(0) by a central stalk formed by the gamma and epsilon chains, while a peripheral stalk is formed by the delta and b chains.

It localises to the cell inner membrane. Functionally, f(1)F(0) ATP synthase produces ATP from ADP in the presence of a proton or sodium gradient. F-type ATPases consist of two structural domains, F(1) containing the extramembraneous catalytic core and F(0) containing the membrane proton channel, linked together by a central stalk and a peripheral stalk. During catalysis, ATP synthesis in the catalytic domain of F(1) is coupled via a rotary mechanism of the central stalk subunits to proton translocation. This protein is part of the stalk that links CF(0) to CF(1). It either transmits conformational changes from CF(0) to CF(1) or is implicated in proton conduction. This is ATP synthase subunit delta from Paraburkholderia phymatum (strain DSM 17167 / CIP 108236 / LMG 21445 / STM815) (Burkholderia phymatum).